Consider the following 123-residue polypeptide: Small ribosomal subunit protein uS12 (123 aa).

Aspartate 89 is modified (3-methylthioaspartic acid).

Belongs to the universal ribosomal protein uS12 family. As to quaternary structure, part of the 30S ribosomal subunit. Contacts proteins S8 and S17. May interact with IF1 in the 30S initiation complex.

Its function is as follows. With S4 and S5 plays an important role in translational accuracy. Interacts with and stabilizes bases of the 16S rRNA that are involved in tRNA selection in the A site and with the mRNA backbone. Located at the interface of the 30S and 50S subunits, it traverses the body of the 30S subunit contacting proteins on the other side and probably holding the rRNA structure together. The combined cluster of proteins S8, S12 and S17 appears to hold together the shoulder and platform of the 30S subunit. The protein is Small ribosomal subunit protein uS12 of Brucella abortus (strain S19).